The primary structure comprises 188 residues: Meiotically up-regulated gene 94 protein (188 aa).

It localises to the cytoplasm. Its subcellular location is the nucleus. Functionally, has a role in meiosis. This Schizosaccharomyces pombe (strain 972 / ATCC 24843) (Fission yeast) protein is Meiotically up-regulated gene 94 protein (mug94).